The sequence spans 131 residues: Snaclec macrovipecetin subunit alpha (131 aa).

3 cysteine pairs are disulfide-bonded: Cys-2–Cys-13, Cys-30–Cys-125, and Cys-100–Cys-117. Residues 9-126 enclose the C-type lectin domain; it reads HEEHCYKVFR…CEDKNPFICK (118 aa).

As to quaternary structure, heterodimer of subunits alpha and beta; disulfide-linked. As to expression, expressed by the venom gland.

It localises to the secreted. Its function is as follows. Interferes with one step of hemostasis (modulation of platelet aggregation, or coagulation cascade, for example). This Macrovipera lebetinus (Levantine viper) protein is Snaclec macrovipecetin subunit alpha.